Consider the following 310-residue polypeptide: 4-hydroxyproline 2-epimerase (310 aa).

Cys-88 acts as the Proton acceptor in catalysis. Substrate contacts are provided by residues 89-90 (GH), His-208, and Asp-232. Catalysis depends on Cys-236, which acts as the Proton donor. A substrate-binding site is contributed by 237 to 238 (GT).

This sequence belongs to the proline racemase family.

The enzyme catalyses trans-4-hydroxy-L-proline = cis-4-hydroxy-D-proline. Its function is as follows. Catalyzes the epimerization of trans-4-hydroxy-L-proline (t4LHyp) to cis-4-hydroxy-D-proline (c4DHyp). Is likely involved in a degradation pathway that converts t4LHyp to alpha-ketoglutarate. Displays no proline racemase activity. In Acinetobacter baumannii (strain AYE), this protein is 4-hydroxyproline 2-epimerase.